The following is a 208-amino-acid chain: Thiamine-phosphate synthase (208 aa).

4-amino-2-methyl-5-(diphosphooxymethyl)pyrimidine is bound by residues 36–40 (QLRMK) and Asp-68. 2 residues coordinate Mg(2+): Asp-69 and Asp-88. Thr-107 serves as a coordination point for 4-amino-2-methyl-5-(diphosphooxymethyl)pyrimidine. 133 to 135 (TTT) lines the 2-[(2R,5Z)-2-carboxy-4-methylthiazol-5(2H)-ylidene]ethyl phosphate pocket. Residue Lys-136 coordinates 4-amino-2-methyl-5-(diphosphooxymethyl)pyrimidine. Gly-169 contributes to the 2-[(2R,5Z)-2-carboxy-4-methylthiazol-5(2H)-ylidene]ethyl phosphate binding site.

This sequence belongs to the thiamine-phosphate synthase family. It depends on Mg(2+) as a cofactor.

It carries out the reaction 2-[(2R,5Z)-2-carboxy-4-methylthiazol-5(2H)-ylidene]ethyl phosphate + 4-amino-2-methyl-5-(diphosphooxymethyl)pyrimidine + 2 H(+) = thiamine phosphate + CO2 + diphosphate. The enzyme catalyses 2-(2-carboxy-4-methylthiazol-5-yl)ethyl phosphate + 4-amino-2-methyl-5-(diphosphooxymethyl)pyrimidine + 2 H(+) = thiamine phosphate + CO2 + diphosphate. It catalyses the reaction 4-methyl-5-(2-phosphooxyethyl)-thiazole + 4-amino-2-methyl-5-(diphosphooxymethyl)pyrimidine + H(+) = thiamine phosphate + diphosphate. It functions in the pathway cofactor biosynthesis; thiamine diphosphate biosynthesis; thiamine phosphate from 4-amino-2-methyl-5-diphosphomethylpyrimidine and 4-methyl-5-(2-phosphoethyl)-thiazole: step 1/1. Condenses 4-methyl-5-(beta-hydroxyethyl)thiazole monophosphate (THZ-P) and 2-methyl-4-amino-5-hydroxymethyl pyrimidine pyrophosphate (HMP-PP) to form thiamine monophosphate (TMP). In Phocaeicola vulgatus (strain ATCC 8482 / DSM 1447 / JCM 5826 / CCUG 4940 / NBRC 14291 / NCTC 11154) (Bacteroides vulgatus), this protein is Thiamine-phosphate synthase.